The chain runs to 479 residues: Ribulose bisphosphate carboxylase large chain 2 (479 aa).

Substrate contacts are provided by asparagine 116 and threonine 166. The Proton acceptor role is filled by lysine 168. Lysine 170 contributes to the substrate binding site. Mg(2+) is bound by residues lysine 194, aspartate 196, and glutamate 197. Lysine 194 bears the N6-carboxylysine mark. The Proton acceptor role is filled by histidine 287. Residues arginine 288, histidine 320, and serine 372 each coordinate substrate.

It belongs to the RuBisCO large chain family. Type I subfamily. Heterohexadecamer of 8 large chains and 8 small chains. Mg(2+) is required as a cofactor.

It carries out the reaction 2 (2R)-3-phosphoglycerate + 2 H(+) = D-ribulose 1,5-bisphosphate + CO2 + H2O. The enzyme catalyses D-ribulose 1,5-bisphosphate + O2 = 2-phosphoglycolate + (2R)-3-phosphoglycerate + 2 H(+). Its function is as follows. RuBisCO catalyzes two reactions: the carboxylation of D-ribulose 1,5-bisphosphate, the primary event in carbon dioxide fixation, as well as the oxidative fragmentation of the pentose substrate. Both reactions occur simultaneously and in competition at the same active site. The protein is Ribulose bisphosphate carboxylase large chain 2 of Bradyrhizobium sp. (strain ORS 278).